The following is a 114-amino-acid chain: T cell receptor beta variable 10-3 (114 aa).

The N-terminal stretch at methionine 1–alanine 21 is a signal peptide. The Ig-like domain occupies glycine 22–glutamate 114. Cysteine 42 and cysteine 110 are disulfide-bonded.

As to quaternary structure, alpha-beta TR is a heterodimer composed of an alpha and beta chain; disulfide-linked. The alpha-beta TR is associated with the transmembrane signaling CD3 coreceptor proteins to form the TR-CD3 (TcR or TCR). The assembly of alpha-beta TR heterodimers with CD3 occurs in the endoplasmic reticulum where a single alpha-beta TR heterodimer associates with one CD3D-CD3E heterodimer, one CD3G-CD3E heterodimer and one CD247 homodimer forming a stable octameric structure. CD3D-CD3E and CD3G-CD3E heterodimers preferentially associate with TR alpha and TR beta chains, respectively. The association of the CD247 homodimer is the last step of TcR assembly in the endoplasmic reticulum and is required for transport to the cell surface.

Its subcellular location is the cell membrane. Its function is as follows. V region of the variable domain of T cell receptor (TR) beta chain that participates in the antigen recognition. Alpha-beta T cell receptors are antigen specific receptors which are essential to the immune response and are present on the cell surface of T lymphocytes. Recognize peptide-major histocompatibility (MH) (pMH) complexes that are displayed by antigen presenting cells (APC), a prerequisite for efficient T cell adaptive immunity against pathogens. Binding of alpha-beta TR to pMH complex initiates TR-CD3 clustering on the cell surface and intracellular activation of LCK that phosphorylates the ITAM motifs of CD3G, CD3D, CD3E and CD247 enabling the recruitment of ZAP70. In turn ZAP70 phosphorylates LAT, which recruits numerous signaling molecules to form the LAT signalosome. The LAT signalosome propagates signal branching to three major signaling pathways, the calcium, the mitogen-activated protein kinase (MAPK) kinase and the nuclear factor NF-kappa-B (NF-kB) pathways, leading to the mobilization of transcription factors that are critical for gene expression and essential for T cell growth and differentiation. The T cell repertoire is generated in the thymus, by V-(D)-J rearrangement. This repertoire is then shaped by intrathymic selection events to generate a peripheral T cell pool of self-MH restricted, non-autoaggressive T cells. Post-thymic interaction of alpha-beta TR with the pMH complexes shapes TR structural and functional avidity. The sequence is that of T cell receptor beta variable 10-3 from Homo sapiens (Human).